Consider the following 419-residue polypeptide: UDP-N-acetylglucosamine 1-carboxyvinyltransferase (419 aa).

22-23 (KN) lines the phosphoenolpyruvate pocket. R93 provides a ligand contact to UDP-N-acetyl-alpha-D-glucosamine. The active-site Proton donor is C117. 2-(S-cysteinyl)pyruvic acid O-phosphothioketal is present on C117. Residues D307 and I329 each contribute to the UDP-N-acetyl-alpha-D-glucosamine site.

The protein belongs to the EPSP synthase family. MurA subfamily.

It localises to the cytoplasm. It carries out the reaction phosphoenolpyruvate + UDP-N-acetyl-alpha-D-glucosamine = UDP-N-acetyl-3-O-(1-carboxyvinyl)-alpha-D-glucosamine + phosphate. It functions in the pathway cell wall biogenesis; peptidoglycan biosynthesis. In terms of biological role, cell wall formation. Adds enolpyruvyl to UDP-N-acetylglucosamine. In Shewanella putrefaciens (strain CN-32 / ATCC BAA-453), this protein is UDP-N-acetylglucosamine 1-carboxyvinyltransferase.